A 516-amino-acid polypeptide reads, in one-letter code: L-amino-acid oxidase (516 aa).

The first 18 residues, 1-18 (MNVFFMFSLLFLAALGSC), serve as a signal peptide directing secretion. The cysteines at positions 28 and 191 are disulfide-linked. Residues 61–62 (MA), 81–82 (EA), Arg-89, and 105–108 (GPMR) each bind FAD. Arg-108 is a binding site for substrate. Asn-190 is a glycosylation site (N-linked (GlcNAc...) (complex) asparagine). His-241 contributes to the substrate binding site. Residue Val-279 coordinates FAD. A disulfide bridge links Cys-349 with Cys-430. Asn-379 carries an N-linked (GlcNAc...) (complex) asparagine glycan. Tyr-390 contributes to the substrate binding site. Residues Glu-475 and 482–487 (GWIDST) each bind FAD. Position 482-483 (482-483 (GW)) interacts with substrate.

Homodimer; non-covalently linked. Requires FAD as cofactor. N-glycosylated at Asn-190 and Asn-379 with bis-sialylated, biantennary, core-fucosylated dodecasaccharide (composed of N-acetylglucosamine, fucose, mannose, galactose, and sialic acid residues). Expressed by the venom gland.

It localises to the secreted. The enzyme catalyses an L-alpha-amino acid + O2 + H2O = a 2-oxocarboxylate + H2O2 + NH4(+). The catalysed reaction is L-leucine + O2 + H2O = 4-methyl-2-oxopentanoate + H2O2 + NH4(+). It carries out the reaction L-phenylalanine + O2 + H2O = 3-phenylpyruvate + H2O2 + NH4(+). It catalyses the reaction L-tryptophan + O2 + H2O = indole-3-pyruvate + H2O2 + NH4(+). The enzyme catalyses L-methionine + O2 + H2O = 4-methylsulfanyl-2-oxobutanoate + H2O2 + NH4(+). The catalysed reaction is L-isoleucine + O2 + H2O = (S)-3-methyl-2-oxopentanoate + H2O2 + NH4(+). It carries out the reaction L-arginine + O2 + H2O = 5-guanidino-2-oxopentanoate + H2O2 + NH4(+). It catalyses the reaction L-aspartate + O2 + H2O = oxaloacetate + H2O2 + NH4(+). The enzyme catalyses L-histidine + O2 + H2O = 3-(imidazol-5-yl)pyruvate + H2O2 + NH4(+). The catalysed reaction is L-2-aminohexanoate + O2 + H2O = 2-oxohexanoate + H2O2 + NH4(+). It carries out the reaction L-2-aminopentanoate + O2 + H2O = 2-oxopentanoate + H2O2 + NH4(+). Functionally, catalyzes an oxidative deamination of predominantly hydrophobic and aromatic L-amino acids, thus producing hydrogen peroxide that may contribute to the diverse toxic effects of this enzyme. Shows high affinity for L-Phe, L-Trp, L-Met, L-Leu, and L-Ile, moderate affinity for L-Arg, L-Asp, and L-His, and very low affinity for L-Gln, L-Lys, and L-Ala. Also shows high activity on L-norleucine (L-2-aminohexanoate), and L-norvaline (L-2-aminopentanoate) and a weak activity on L-ornithine and L-aminobutyric acid. Also exhibits diverse biological activities, such as hemorrhage, hemolysis, edema, apoptosis of vascular endothelial cells or tumor cell lines, and antiparasitic activities, as well as regulation of platelet aggregation. Its effect on platelets is controversial, since it either induces aggregation or inhibits agonist-induced aggregation. These different effects are probably due to different experimental conditions. A possible explanation of high efficacy it that LAAO may bind to target cells through its sialylated glycan moiety that would bind to sialic acid-binding lectins (siglec) on target cells. This interaction may result in production of locally high concentrations of hydrogen peroxide in or near the binding interface, leading, in turn to oxidative damage of the siglec or another adjacent cell structural elements. This chain is L-amino-acid oxidase, found in Calloselasma rhodostoma (Malayan pit viper).